A 283-amino-acid chain; its full sequence is Cyclin-C (283 aa).

In terms of domain architecture, Cyclin N-terminal spans 46–144 (NVIQALGEHL…ILECEFYLLE (99 aa)). Residues 252-283 (TILSKMPKPKPPPNSEGEQGPNGSQNSSYSQS) are disordered. The segment covering 272 to 283 (PNGSQNSSYSQS) has biased composition (polar residues).

It belongs to the cyclin family. Cyclin C subfamily. Component of the Mediator complex. The cylin/CDK pair formed by CCNC/CDK8 also associates with the large subunit of RNA polymerase II.

Its subcellular location is the nucleus. Functionally, component of the Mediator complex, a coactivator involved in regulated gene transcription of nearly all RNA polymerase II-dependent genes. Mediator functions as a bridge to convey information from gene-specific regulatory proteins to the basal RNA polymerase II transcription machinery. Mediator is recruited to promoters by direct interactions with regulatory proteins and serves as a scaffold for the assembly of a functional preinitiation complex with RNA polymerase II and the general transcription factors. Binds to and activates cyclin-dependent kinase CDK8 that phosphorylates the CTD (C-terminal domain) of the large subunit of RNA polymerase II (RNAp II), which may inhibit the formation of a transcription initiation complex. The sequence is that of Cyclin-C (CCNC) from Gallus gallus (Chicken).